We begin with the raw amino-acid sequence, 87 residues long: Small ribosomal subunit protein bS20 (87 aa).

Residues 1–15 (MANHKSAAKRARQSI) are compositionally biased toward basic residues. The tract at residues 1-29 (MANHKSAAKRARQSIRKTAVNNARKSTVK) is disordered. Polar residues predominate over residues 19-29 (AVNNARKSTVK).

The protein belongs to the bacterial ribosomal protein bS20 family.

Functionally, binds directly to 16S ribosomal RNA. In Bdellovibrio bacteriovorus (strain ATCC 15356 / DSM 50701 / NCIMB 9529 / HD100), this protein is Small ribosomal subunit protein bS20.